The chain runs to 372 residues: MHC class I-like protein MILL2 (372 aa).

Positions 1–26 (MEASSGTAGPAVLLLILALLLTESQG) are cleaved as a signal peptide. The interval 28-119 (RSQGTHTLRY…MINQKGHDKG (92 aa)) is alpha-1. 3 cysteine pairs are disulfide-bonded: cysteine 78–cysteine 89, cysteine 129–cysteine 191, and cysteine 230–cysteine 287. The segment at 120–210 (PYTLQATLDC…SLSNVLPDTG (91 aa)) is alpha-2. 3 N-linked (GlcNAc...) asparagine glycosylation sites follow: asparagine 134, asparagine 234, and asparagine 293. The Ig-like C1-type domain occupies 192-302 (PARLQRHLAS…NRTIMQTAVS (111 aa)). Residues 211 to 339 (SPVVIVTCRN…VVDGGLVTGN (129 aa)) form an alpha-3 region. A disordered region spans residues 308–349 (WPSASWATRQEAEGPHRTHNDHVVDGGLVTGNANKDSPDASS). Basic and acidic residues predominate over residues 317–331 (QEAEGPHRTHNDHVV). Positions 340-348 (ANKDSPDAS) are connecting peptide. Serine 349 carries the GPI-anchor amidated serine lipid modification. Positions 350-372 (CATASAISAFPVVVLSVALPRAN) are cleaved as a propeptide — removed in mature form.

Belongs to the MHC class I family. In terms of assembly, heterodimer with B2M. As to expression, ubiquitously expressed in neonatal and adult tissues.

It localises to the cell membrane. Binds to heparan sulfate proteoglycans on the surface of fibroblast cells. The sequence is that of MHC class I-like protein MILL2 from Rattus norvegicus (Rat).